The sequence spans 300 residues: Porphobilinogen deaminase (300 aa).

S-(dipyrrolylmethanemethyl)cysteine is present on C242.

Belongs to the HMBS family. As to quaternary structure, monomer. The cofactor is dipyrromethane.

The catalysed reaction is 4 porphobilinogen + H2O = hydroxymethylbilane + 4 NH4(+). It participates in porphyrin-containing compound metabolism; protoporphyrin-IX biosynthesis; coproporphyrinogen-III from 5-aminolevulinate: step 2/4. Its function is as follows. Tetrapolymerization of the monopyrrole PBG into the hydroxymethylbilane pre-uroporphyrinogen in several discrete steps. The sequence is that of Porphobilinogen deaminase from Blochmanniella pennsylvanica (strain BPEN).